A 600-amino-acid polypeptide reads, in one-letter code: Molybdenum cofactor biosynthesis protein moc-5 (600 aa).

The tract at residues 4–371 (RAGKKLFQWS…AVNNKKARHA (368 aa)) is molybdenum cofactor biosynthesis protein A. Residues 68–284 (MFMREHTYLR…VDKYGDGVIR (217 aa)) form the Radical SAM core domain. Arg-77 contacts GTP. [4Fe-4S] cluster is bound by residues Cys-84 and Cys-88. Tyr-90 contacts S-adenosyl-L-methionine. Position 91 (Cys-91) interacts with [4Fe-4S] cluster. Position 127 (Arg-127) interacts with GTP. Gly-131 is a binding site for S-adenosyl-L-methionine. Thr-158 serves as a coordination point for GTP. Ser-182 contributes to the S-adenosyl-L-methionine binding site. Lys-218 lines the GTP pocket. Met-252 contributes to the S-adenosyl-L-methionine binding site. [4Fe-4S] cluster-binding residues include Cys-316 and Cys-319. 321–323 (RLR) lines the GTP pocket. A [4Fe-4S] cluster-binding site is contributed by Cys-333. The disordered stretch occupies residues 369–390 (RHAVFRNGRSEEPAKSSNDSYR). The tract at residues 396 to 595 (TSASSILVHL…SGGKTTYTID (200 aa)) is molybdenum cofactor biosynthesis protein C. Catalysis depends on Asp-566, which acts as the For molybdenum cofactor biosynthesis protein C activity.

In the C-terminal section; belongs to the MoaC family. This sequence in the N-terminal section; belongs to the radical SAM superfamily. MoaA family. Isoform a and isoform b probably form a heterooligomer. It depends on [4Fe-4S] cluster as a cofactor.

The catalysed reaction is GTP + AH2 + S-adenosyl-L-methionine = (8S)-3',8-cyclo-7,8-dihydroguanosine 5'-triphosphate + 5'-deoxyadenosine + L-methionine + A + H(+). It catalyses the reaction (8S)-3',8-cyclo-7,8-dihydroguanosine 5'-triphosphate = cyclic pyranopterin phosphate + diphosphate. It functions in the pathway cofactor biosynthesis; molybdopterin biosynthesis. Functionally, probably forms a complex with isoform b that catalyzes the conversion of 5'-GTP to cyclic pyranopterin monophosphate (cPMP). Catalyzes the cyclization of GTP to (8S)-3',8-cyclo-7,8-dihydroguanosine 5'-triphosphate and mocs1b catalyzes the subsequent conversion of (8S)-3',8-cyclo-7,8-dihydroguanosine 5'-triphosphate to cPMP. Its function is as follows. Probably forms a complex with isoform a that catalyzes the conversion of 5'-GTP to cyclic pyranopterin monophosphate (cPMP). The protein is Molybdenum cofactor biosynthesis protein moc-5 of Caenorhabditis elegans.